A 450-amino-acid polypeptide reads, in one-letter code: DNA primase DnaG (450 aa).

The Toprim domain occupies 199-273 (DSIIVVEGRA…DVDYVARAPE (75 aa)). Positions 205, 247, and 249 each coordinate Mg(2+). Residues 320-348 (APSKEVKPAPKHEPKPQPVEQKPREEKII) show a composition bias toward basic and acidic residues. The disordered stretch occupies residues 320 to 350 (APSKEVKPAPKHEPKPQPVEQKPREEKIIRP).

It belongs to the archaeal DnaG primase family. In terms of assembly, forms a ternary complex with MCM helicase and DNA. Component of the archaeal exosome complex. It depends on Mg(2+) as a cofactor.

It catalyses the reaction ssDNA + n NTP = ssDNA/pppN(pN)n-1 hybrid + (n-1) diphosphate.. RNA polymerase that catalyzes the synthesis of short RNA molecules used as primers for DNA polymerase during DNA replication. Also part of the exosome, which is a complex involved in RNA degradation. Acts as a poly(A)-binding protein that enhances the interaction between heteromeric, adenine-rich transcripts and the exosome. This Thermococcus gammatolerans (strain DSM 15229 / JCM 11827 / EJ3) protein is DNA primase DnaG.